Consider the following 357-residue polypeptide: Peptide chain release factor 1 (357 aa).

Glutamine 234 bears the N5-methylglutamine mark. A disordered region spans residues 283–313; the sequence is SKKQEQRSSNRKQQVGSGDRSERIRTYNFPQ.

This sequence belongs to the prokaryotic/mitochondrial release factor family. In terms of processing, methylated by PrmC. Methylation increases the termination efficiency of RF1.

The protein localises to the cytoplasm. In terms of biological role, peptide chain release factor 1 directs the termination of translation in response to the peptide chain termination codons UAG and UAA. The polypeptide is Peptide chain release factor 1 (prfA) (Borreliella burgdorferi (strain ATCC 35210 / DSM 4680 / CIP 102532 / B31) (Borrelia burgdorferi)).